A 74-amino-acid polypeptide reads, in one-letter code: Progonadoliberin-3 (74 aa).

A signal peptide spans 1–15; it reads VQVVVLALVAQVTLS. Gln-16 bears the Pyrrolidone carboxylic acid mark. Position 25 is a glycine amide (Gly-25).

Belongs to the GnRH family.

It localises to the secreted. Functionally, stimulates the secretion of gonadotropins. In Oncorhynchus mykiss (Rainbow trout), this protein is Progonadoliberin-3 (gnrh3).